A 230-amino-acid polypeptide reads, in one-letter code: MDFESKYCTSQVNGTITITTRKVLDENLKSLLDEGKGELFLSCIPRNHSCSPRWIVEVASELGEVYIMRYKIDFSGNSRGYAYLQYINVDLKESAMQYLPMRFRQLCMCLRVEPSTNNRELVLKNVESSLRPWQVYQEMLKIHPFTIVRVYEYQLDQFFYIFEYRNNDSAASAHQRVRNSIRKFGEHAHISWLTAENILSRASGSFCFQREVSQNRTRRVPPRQKGCFKF.

In terms of domain architecture, RRM spans 37–128; that stretch reads GELFLSCIPR…RELVLKNVES (92 aa).

Part of a complex composed of at least tut, bam and bgcn; complex formation does not require RNA. Interacts with bam (via N-terminus); the interaction is direct. Interacts with bgcn; the interaction is indirect and is mediated by bam. As part of the bam-bgcn-tut complex associates with twin; may recruit the CCR4-NOT1 deadenylation complex to mRNA 3'UTRs to mediate post-transcriptional regulation of expression.

The protein localises to the cytoplasm. Its function is as follows. RNA binding protein that forms a complex with bam and bgcn, involved in 3'UTR-dependent regulation of a subset of mRNAs. Preferentially binds a long isoform of mei-P26 transcripts. Involved in 3'UTR-dependent post-transcriptional repression of several 3'-RNA processing factors. Involved in promoting germline stem cell lineage differentiation and mitosis-to-meiosis transition. Required for proper transit amplification of spermatogonia. The protein is Protein tumorous testis of Drosophila melanogaster (Fruit fly).